Consider the following 382-residue polypeptide: ATP phosphoribosyltransferase regulatory subunit (382 aa).

It belongs to the class-II aminoacyl-tRNA synthetase family. HisZ subfamily. As to quaternary structure, heteromultimer composed of HisG and HisZ subunits.

The protein localises to the cytoplasm. The protein operates within amino-acid biosynthesis; L-histidine biosynthesis; L-histidine from 5-phospho-alpha-D-ribose 1-diphosphate: step 1/9. Required for the first step of histidine biosynthesis. May allow the feedback regulation of ATP phosphoribosyltransferase activity by histidine. In Burkholderia thailandensis (strain ATCC 700388 / DSM 13276 / CCUG 48851 / CIP 106301 / E264), this protein is ATP phosphoribosyltransferase regulatory subunit.